The sequence spans 361 residues: Cyclic AMP receptor-like protein C (361 aa).

Residues 1–18 are Extracellular-facing; that stretch reads MGIEESQICNPSDREFLS. A helical transmembrane segment spans residues 19-39; sequence VDILNIVTSSLSLMGSALTII. Residues 40–113 lie on the Cytoplasmic side of the membrane; the sequence is SYIWKKVRRH…HGTYKQPTSK (74 aa). A helical membrane pass occupies residues 114–134; it reads LPLLIFMLSIADFFTSFFIII. The Extracellular portion of the chain corresponds to 135–166; sequence SQSYLINNSKSYSTPYSPDLKIHFSPCIILRA. The chain crosses the membrane as a helical span at residues 167 to 187; that stretch reads IIQFFFLSTFFWTTCISYYLF. Residues 188–197 lie on the Cytoplasmic side of the membrane; sequence HQLSSPGEEK. The helical transmembrane segment at 198 to 218 threads the bilayer; it reads YLLAIFNVVSWGIPFAISMVI. Topologically, residues 219–238 are extracellular; that stretch reads TMTNSIVVNSDGWCEVAKPM. Residues 239–259 form a helical membrane-spanning segment; sequence ELSLWFLPLFLCLLVCSIYYF. At 260–292 the chain is on the cytoplasmic side; it reads RLRRLFRSKFEYRLQINDRLKQLDSTISRRLTL. A helical transmembrane segment spans residues 293 to 313; the sequence is YIVVFVICWLPDVIQHFISFF. Residues 314 to 318 lie on the Extracellular side of the membrane; sequence SKCTF. A helical membrane pass occupies residues 319–339; the sequence is FPLLILQNILTPSQGFWNFWI. Residues 340-361 are Cytoplasmic-facing; sequence YSYTNKIARFTPSNDENKRLLQ.

Belongs to the G-protein coupled receptor 5 family.

It localises to the membrane. Its function is as follows. Receptor for cAMP. The chain is Cyclic AMP receptor-like protein C (crlC) from Dictyostelium discoideum (Social amoeba).